Here is a 130-residue protein sequence, read N- to C-terminus: Small ribosomal subunit protein uS8 (130 aa).

The protein belongs to the universal ribosomal protein uS8 family. As to quaternary structure, part of the 30S ribosomal subunit. Contacts proteins S5 and S12.

One of the primary rRNA binding proteins, it binds directly to 16S rRNA central domain where it helps coordinate assembly of the platform of the 30S subunit. The protein is Small ribosomal subunit protein uS8 of Ectopseudomonas mendocina (strain ymp) (Pseudomonas mendocina).